A 385-amino-acid chain; its full sequence is Alanine racemase (385 aa).

The active-site Proton acceptor; specific for D-alanine is the Lys40. At Lys40 the chain carries N6-(pyridoxal phosphate)lysine. Substrate is bound at residue Arg139. The active-site Proton acceptor; specific for L-alanine is the Tyr268. Met315 is a substrate binding site.

It belongs to the alanine racemase family. Requires pyridoxal 5'-phosphate as cofactor.

It catalyses the reaction L-alanine = D-alanine. It participates in amino-acid biosynthesis; D-alanine biosynthesis; D-alanine from L-alanine: step 1/1. Its function is as follows. Catalyzes the interconversion of L-alanine and D-alanine. May also act on other amino acids. This is Alanine racemase (alr) from Anoxybacillus flavithermus (strain DSM 21510 / WK1).